Here is a 1080-residue protein sequence, read N- to C-terminus: Presequence protease 1, chloroplastic/mitochondrial (1080 aa).

The transit peptide at 1–85 (MLRTVSCLAS…GQFSRLSVRA (85 aa)) directs the protein to the chloroplast and mitochondrion. Valine 86 carries the N-acetylvaline modification. Histidine 162 is a Zn(2+) binding site. Glutamate 165 serves as the catalytic Proton acceptor. Histidine 166 contributes to the Zn(2+) binding site. Glutamate 240 is an active-site residue. Residue glutamate 262 coordinates Zn(2+). The stretch at 571 to 612 (EKATQEEVEEKNILEKVKAAMTEEDLAELARATEELKLKQET) forms a coiled coil. Residue arginine 705 participates in Mg(2+) binding.

It belongs to the peptidase M16 family. PreP subfamily. In terms of assembly, homodimer. It depends on Zn(2+) as a cofactor. The cofactor is Mg(2+). In terms of tissue distribution, expressed only in siliques and flowers.

It is found in the plastid. The protein resides in the chloroplast stroma. The protein localises to the mitochondrion matrix. Inactive in the absence of MgCl(2) and CaCl(2) and full activation at 10 mM concentrations of either ion. Completely inhibited by the metal chelator orthophenanthroline, but not affected by phenylmethylsulfonyl fluoride (PMSF) or N-ethylmaleimide (NEM). ATP-independent protease that degrades both mitochondrial and chloroplastic transit peptides after their cleavage. Also degrades other unstructured peptides. Specific for peptides in the range of 10 to 65 residues. Shows a preference for cleavage after small polar residues and before basic residues, with a bias for positively charged amino acid residues. In Arabidopsis thaliana (Mouse-ear cress), this protein is Presequence protease 1, chloroplastic/mitochondrial (PREP1).